Reading from the N-terminus, the 184-residue chain is MEGSGTEQKGSPKCSFLTNSLLCHENRQRLWRICNFIMFGFFSLAAYVQINDPDAEMWIVIYMIPAVLILFVSIKPDITGHVIWKLLADLHSAVCAVGAIYLSGCLYFYTSKNILHEEEGRELSGLLIISGWLLLCRKSHQSAIGAIRLIIAISVSTAPFFIWIYIYIDKEMRTSWPQHCKTVI.

Transmembrane regions (helical) follow at residues 30–50 (LWRI…YVQI), 54–74 (DAEM…FVSI), 82–102 (VIWK…AIYL), 121–137 (RELS…LLCR), and 149–169 (LIIA…IYID).

Its subcellular location is the membrane. The polypeptide is Transmembrane protein 220 (tmem220) (Xenopus laevis (African clawed frog)).